The chain runs to 118 residues: Fluoride-specific ion channel FluC 1 (118 aa).

4 helical membrane passes run 5–25, 39–59, 61–81, and 98–118; these read FLLV…ISIF, FFIN…ALGP, WQLF…TFKV, and YVGL…MLGV. Positions 71 and 74 each coordinate Na(+).

The protein belongs to the fluoride channel Fluc/FEX (TC 1.A.43) family.

The protein resides in the cell membrane. The catalysed reaction is fluoride(in) = fluoride(out). With respect to regulation, na(+) is not transported, but it plays an essential structural role and its presence is essential for fluoride channel function. Fluoride-specific ion channel. Important for reducing fluoride concentration in the cell, thus reducing its toxicity. This Listeria innocua serovar 6a (strain ATCC BAA-680 / CLIP 11262) protein is Fluoride-specific ion channel FluC 1.